A 607-amino-acid polypeptide reads, in one-letter code: Glutamine--fructose-6-phosphate aminotransferase [isomerizing] (607 aa).

Residue Cys-2 is the Nucleophile; for GATase activity of the active site. The 216-residue stretch at 2-217 (CGIIGILGKK…DGDWAVLTRE (216 aa)) folds into the Glutamine amidotransferase type-2 domain. SIS domains lie at 277–422 (TVRS…QRGS) and 455–597 (ICRD…VDQP). Lys-602 functions as the For Fru-6P isomerization activity in the catalytic mechanism.

As to quaternary structure, homodimer.

Its subcellular location is the cytoplasm. It catalyses the reaction D-fructose 6-phosphate + L-glutamine = D-glucosamine 6-phosphate + L-glutamate. Its function is as follows. Catalyzes the first step in hexosamine metabolism, converting fructose-6P into glucosamine-6P using glutamine as a nitrogen source. The polypeptide is Glutamine--fructose-6-phosphate aminotransferase [isomerizing] (Bartonella quintana (strain Toulouse) (Rochalimaea quintana)).